A 166-amino-acid polypeptide reads, in one-letter code: Lipoprotein signal peptidase (166 aa).

4 helical membrane passes run 10-30, 46-66, 71-91, and 100-120; these read GGAL…DQLT, LTPF…GFLA, WQRW…CYLL, and FSLS…DRLI. Catalysis depends on residues Asp-126 and Asp-144. The chain crosses the membrane as a helical span at residues 135–155; sequence WHWPAFNLADSAITVGAVLLI.

The protein belongs to the peptidase A8 family.

It localises to the cell inner membrane. It catalyses the reaction Release of signal peptides from bacterial membrane prolipoproteins. Hydrolyzes -Xaa-Yaa-Zaa-|-(S,diacylglyceryl)Cys-, in which Xaa is hydrophobic (preferably Leu), and Yaa (Ala or Ser) and Zaa (Gly or Ala) have small, neutral side chains.. It functions in the pathway protein modification; lipoprotein biosynthesis (signal peptide cleavage). In terms of biological role, this protein specifically catalyzes the removal of signal peptides from prolipoproteins. The sequence is that of Lipoprotein signal peptidase from Burkholderia thailandensis (strain ATCC 700388 / DSM 13276 / CCUG 48851 / CIP 106301 / E264).